The sequence spans 447 residues: Asparagine--tRNA ligase (447 aa).

This sequence belongs to the class-II aminoacyl-tRNA synthetase family. Homodimer.

The protein resides in the cytoplasm. The enzyme catalyses tRNA(Asn) + L-asparagine + ATP = L-asparaginyl-tRNA(Asn) + AMP + diphosphate + H(+). The protein is Asparagine--tRNA ligase of Streptococcus pneumoniae (strain ATCC BAA-255 / R6).